A 286-amino-acid polypeptide reads, in one-letter code: Putative quercetin 2,3-dioxygenase PA2418 (286 aa).

Residues His61, His63, His105, and Glu107 each contribute to the a divalent metal cation site.

This sequence belongs to the pirin family. A divalent metal cation serves as cofactor.

The enzyme catalyses quercetin + O2 = 2-(3,4-dihydroxybenzoyloxy)-4,6-dihydroxybenzoate + CO. It participates in flavonoid metabolism; quercetin degradation. In terms of biological role, putative quercetin 2,3-dioxygenase. This chain is Putative quercetin 2,3-dioxygenase PA2418, found in Pseudomonas aeruginosa (strain ATCC 15692 / DSM 22644 / CIP 104116 / JCM 14847 / LMG 12228 / 1C / PRS 101 / PAO1).